We begin with the raw amino-acid sequence, 424 residues long: Serine hydroxymethyltransferase 2 (424 aa).

(6S)-5,6,7,8-tetrahydrofolate-binding positions include leucine 125 and 129-131; that span reads GHL. At lysine 234 the chain carries N6-(pyridoxal phosphate)lysine. Glutamate 250 is a binding site for (6S)-5,6,7,8-tetrahydrofolate.

This sequence belongs to the SHMT family. As to quaternary structure, homodimer. Pyridoxal 5'-phosphate serves as cofactor.

The protein localises to the cytoplasm. It catalyses the reaction (6R)-5,10-methylene-5,6,7,8-tetrahydrofolate + glycine + H2O = (6S)-5,6,7,8-tetrahydrofolate + L-serine. It functions in the pathway one-carbon metabolism; tetrahydrofolate interconversion. Its pathway is amino-acid biosynthesis; glycine biosynthesis; glycine from L-serine: step 1/1. Its function is as follows. Catalyzes the reversible interconversion of serine and glycine with tetrahydrofolate (THF) serving as the one-carbon carrier. This reaction serves as the major source of one-carbon groups required for the biosynthesis of purines, thymidylate, methionine, and other important biomolecules. Also exhibits THF-independent aldolase activity toward beta-hydroxyamino acids, producing glycine and aldehydes, via a retro-aldol mechanism. This chain is Serine hydroxymethyltransferase 2, found in Cupriavidus pinatubonensis (strain JMP 134 / LMG 1197) (Cupriavidus necator (strain JMP 134)).